The sequence spans 370 residues: MPALSLQQLQLINFRSYKCLTWDCRPGLNIIFGPNAAGKTNLLEAIGYLALARSFRQQQDQQLLTWGASSFQVRGLCHSNGEKIELVINYQQHNKRLTINGNRNRLIELLGIFPVIYFGPDDLHLLKGGPAYRRHFLDREISMGDRLYCRNLQDYRRILFQRNLLLRAIKAGRGKEGELEPWDIQLLATGKAICEKRSCFLQSLAPRVAATYRDMAGGEELALIYRPGVASQEEWAERLKVGREREVQAGMTLWGPHRDDFTFTLDGHEARYFASQGQQRAIVLALKLAEARYYRELLHVMPVLLLDDVFSELDEAHQGALLELLAGADQAFLTTTEVGLLPARLIQRSHLWELARGREPRLTSGPVEAQ.

Residue Gly33–Thr40 participates in ATP binding.

It belongs to the RecF family.

The protein localises to the cytoplasm. Functionally, the RecF protein is involved in DNA metabolism; it is required for DNA replication and normal SOS inducibility. RecF binds preferentially to single-stranded, linear DNA. It also seems to bind ATP. This chain is DNA replication and repair protein RecF, found in Moorella thermoacetica (strain ATCC 39073 / JCM 9320).